Reading from the N-terminus, the 184-residue chain is Ribosome-recycling factor (184 aa).

The protein belongs to the RRF family.

It is found in the cytoplasm. In terms of biological role, responsible for the release of ribosomes from messenger RNA at the termination of protein biosynthesis. May increase the efficiency of translation by recycling ribosomes from one round of translation to another. This is Ribosome-recycling factor from Acinetobacter baumannii (strain SDF).